A 578-amino-acid chain; its full sequence is Avenacosidase 2 (578 aa).

The transit peptide at 1 to 57 directs the protein to the chloroplast; that stretch reads MALLCSALSNSTHPSFRSHIAGANSENLWHLSAHPAQKSKRRCNLTLSSRAAARISS. Residues glutamine 89, histidine 193, and 238-239 each bind a beta-D-glucoside; that span reads NE. The Proton donor role is filled by glutamate 239. Cysteine 258 and cysteine 264 are joined by a disulfide. A beta-D-glucoside-binding positions include tyrosine 381, glutamate 454, tryptophan 504, 511-512, and phenylalanine 520; that span reads EW. Glutamate 454 functions as the Nucleophile in the catalytic mechanism.

Belongs to the glycosyl hydrolase 1 family. In terms of assembly, heteromultimer with P60A in a 1:1 stoichiometry. Aggregates to form the fibrillar stromacentre.

The protein localises to the plastid. It localises to the chloroplast stroma. It catalyses the reaction avenacoside B + H2O = 26-desgluco-avenacoside B + D-glucose. Functionally, beta-glucosidase acting as a preformed defense system. Hydrolyzes the bisdesmosides avenacosides A and B to 26-desgluco-avenacosides exhibiting fungicidal activity. Can use beta-fucoside &gt; beta-glucoside &gt; beta-galactoside &gt; beta-xyloside as substrates, but not alpha-glycosides, beta-thioglucosides and disaccharides. The sequence is that of Avenacosidase 2 (P60B) from Avena sativa (Oat).